Reading from the N-terminus, the 395-residue chain is MIMNLFKGMPKFTFLNKINPFSMALFNSAKMEKVVSATLKRGLDDEGDELEYDHEMDRLYSFPGEKSGKTNIHKKQKTNDKSTMFWMETLNRISNGEIHTEYEVHNFLIMGNGQTNRYIQQNIMEMINEINDRFTIWDYRLETDQLEKRDVDLMGTHVALIVNPPEKITTDIVVKFIGKMKEQGIRAGLIIVNQDEIVHGSAPMPLGIITHTFGSRILPLLAQNNITALTDKEDNVPPPPKNKYKKRVAIKEEVEYIPQPNADPFLLDTLTEITEEEDLANMVDYESVAKGKEIDNAEIEKTIKEYENIEEGIEDIVKYGYELELEKPTEMDEEEFEVMNQEETVPEEFVITDDLFTDAVYSPVSSDVEAELNKVLFESNEDVNDLDQELMVEFD.

Residues 288-318 (VAKGKEIDNAEIEKTIKEYENIEEGIEDIVK) are a coiled coil.

This is an uncharacterized protein from Ostreid herpesvirus 1 (isolate France) (OsHV-1).